The following is a 1141-amino-acid chain: Myosin-binding protein C, slow-type (1141 aa).

Over residues M1–N10 the composition is skewed to basic and acidic residues. Residues M1 to N51 form a disordered region. Ig-like C2-type domains follow at residues G72 to V144, S251 to P340, P341 to K431, P432 to D520, and P522 to F619. T406 carries the post-translational modification Phosphothreonine. S611 bears the Phosphoserine mark. Fibronectin type-III domains are found at residues P622–P721 and T722–I833. A Phosphothreonine modification is found at T798. Position 823 is a phosphotyrosine (Y823). An Ig-like C2-type 6 domain is found at P837–R931. One can recognise a Fibronectin type-III 3 domain in the interval P934–D1029. The 95-residue stretch at P1047–Q1141 folds into the Ig-like C2-type 7 domain.

This sequence belongs to the immunoglobulin superfamily. MyBP family. As to quaternary structure, interacts with USP25 (isoform USP25m only); the interaction prevents proteasomal degradation of MYBPC1.

Thick filament-associated protein located in the crossbridge region of vertebrate striated muscle a bands. Slow skeletal protein that binds to both myosin and actin. In vitro, binds to native thin filaments and modifies the activity of actin-activated myosin ATPase. May modulate muscle contraction or may play a more structural role. This chain is Myosin-binding protein C, slow-type (MYBPC1), found in Homo sapiens (Human).